Here is a 430-residue protein sequence, read N- to C-terminus: Tol-Pal system protein TolB (430 aa).

The first 21 residues, 1–21 (MKQALRVAFGFLILWASVLHA), serve as a signal peptide directing secretion.

The protein belongs to the TolB family. In terms of assembly, the Tol-Pal system is composed of five core proteins: the inner membrane proteins TolA, TolQ and TolR, the periplasmic protein TolB and the outer membrane protein Pal. They form a network linking the inner and outer membranes and the peptidoglycan layer.

Its subcellular location is the periplasm. Functionally, part of the Tol-Pal system, which plays a role in outer membrane invagination during cell division and is important for maintaining outer membrane integrity. TolB occupies a key intermediary position in the Tol-Pal system because it communicates directly with both membrane-embedded components, Pal in the outer membrane and TolA in the inner membrane. The chain is Tol-Pal system protein TolB from Escherichia coli O8 (strain IAI1).